A 265-amino-acid polypeptide reads, in one-letter code: Cell division protein FtsQ (265 aa).

Residues 1–13 (MAGATTAKGGARR) are compositionally biased toward low complexity. The disordered stretch occupies residues 1–25 (MAGATTAKGGARRTPPPGPPPPALK). Residues 1 to 35 (MAGATTAKGGARRTPPPGPPPPALKARRRLRLPRR) lie on the Cytoplasmic side of the membrane. Residues 14–23 (TPPPGPPPPA) are compositionally biased toward pro residues. Residues 36–58 (RTLLVTGVATALLGSGVTWLLYG) traverse the membrane as a helical segment. At 59 to 265 (SSWLRVEQVA…APTAPAVTHS (207 aa)) the chain is on the extracellular side. Positions 62 to 131 (LRVEQVAVSG…DTIAVRVTER (70 aa)) constitute a POTRA domain.

It belongs to the FtsQ/DivIB family. FtsQ subfamily.

It is found in the cell membrane. Functionally, essential cell division protein. This Streptomyces bingchenggensis (strain BCW-1) protein is Cell division protein FtsQ.